The sequence spans 316 residues: 4-hydroxy-3-methylbut-2-enyl diphosphate reductase (316 aa).

Cysteine 12 is a binding site for [4Fe-4S] cluster. Residues histidine 41 and histidine 74 each contribute to the (2E)-4-hydroxy-3-methylbut-2-enyl diphosphate site. Positions 41 and 74 each coordinate dimethylallyl diphosphate. Histidine 41 and histidine 74 together coordinate isopentenyl diphosphate. Position 96 (cysteine 96) interacts with [4Fe-4S] cluster. (2E)-4-hydroxy-3-methylbut-2-enyl diphosphate is bound at residue histidine 124. Histidine 124 contacts dimethylallyl diphosphate. Histidine 124 contributes to the isopentenyl diphosphate binding site. The active-site Proton donor is the glutamate 126. Threonine 167 is a (2E)-4-hydroxy-3-methylbut-2-enyl diphosphate binding site. Cysteine 197 is a [4Fe-4S] cluster binding site. Residues serine 225, serine 226, asparagine 227, and serine 269 each contribute to the (2E)-4-hydroxy-3-methylbut-2-enyl diphosphate site. Residues serine 225, serine 226, asparagine 227, and serine 269 each contribute to the dimethylallyl diphosphate site. Isopentenyl diphosphate contacts are provided by serine 225, serine 226, asparagine 227, and serine 269.

It belongs to the IspH family. Homodimer. The cofactor is [4Fe-4S] cluster.

The catalysed reaction is isopentenyl diphosphate + 2 oxidized [2Fe-2S]-[ferredoxin] + H2O = (2E)-4-hydroxy-3-methylbut-2-enyl diphosphate + 2 reduced [2Fe-2S]-[ferredoxin] + 2 H(+). The enzyme catalyses dimethylallyl diphosphate + 2 oxidized [2Fe-2S]-[ferredoxin] + H2O = (2E)-4-hydroxy-3-methylbut-2-enyl diphosphate + 2 reduced [2Fe-2S]-[ferredoxin] + 2 H(+). It participates in isoprenoid biosynthesis; dimethylallyl diphosphate biosynthesis; dimethylallyl diphosphate from (2E)-4-hydroxy-3-methylbutenyl diphosphate: step 1/1. It functions in the pathway isoprenoid biosynthesis; isopentenyl diphosphate biosynthesis via DXP pathway; isopentenyl diphosphate from 1-deoxy-D-xylulose 5-phosphate: step 6/6. Functionally, catalyzes the conversion of 1-hydroxy-2-methyl-2-(E)-butenyl 4-diphosphate (HMBPP) into a mixture of isopentenyl diphosphate (IPP) and dimethylallyl diphosphate (DMAPP). Acts in the terminal step of the DOXP/MEP pathway for isoprenoid precursor biosynthesis. This is 4-hydroxy-3-methylbut-2-enyl diphosphate reductase from Salmonella agona (strain SL483).